The following is a 305-amino-acid chain: ATP synthase gamma chain (305 aa).

It belongs to the ATPase gamma chain family. F-type ATPases have 2 components, CF(1) - the catalytic core - and CF(0) - the membrane proton channel. CF(1) has five subunits: alpha(3), beta(3), gamma(1), delta(1), epsilon(1). CF(0) has three main subunits: a, b and c.

It is found in the cell membrane. In terms of biological role, produces ATP from ADP in the presence of a proton gradient across the membrane. The gamma chain is believed to be important in regulating ATPase activity and the flow of protons through the CF(0) complex. This is ATP synthase gamma chain from Mycobacterium tuberculosis (strain ATCC 25177 / H37Ra).